We begin with the raw amino-acid sequence, 606 residues long: Double-stranded RNA-binding protein Staufen homolog 2 (606 aa).

DRBM domains are found at residues 8–75 (TPMC…ESSL) and 95–181 (TPTV…ALKN). Disordered stretches follow at residues 57–97 (SIKK…ITPT) and 177–205 (QALK…SDAS). Positions 85-97 (ADSNSNPGSITPT) are enriched in polar residues. A compositionally biased stretch (basic and acidic residues) spans 192 to 205 (SEEKKETEENSDAS). DRBM domains are found at residues 207–274 (SEIS…ELKK), 307–375 (NPIS…QLGY), and 493–557 (QPSQ…QLSE). The interval 580 to 606 (RLAERTESKPTNSGTTAQDCKDSKAVV) is disordered. The segment covering 588-597 (KPTNSGTTAQ) has biased composition (polar residues).

RNA-binding protein required for the microtubule-dependent transport of RNAs within polarized cell types. In Danio rerio (Zebrafish), this protein is Double-stranded RNA-binding protein Staufen homolog 2 (stau2).